We begin with the raw amino-acid sequence, 415 residues long: Trehalose synthase (415 aa).

The protein belongs to the glycosyltransferase group 1 family. Glycosyltransferase 4 subfamily. As to quaternary structure, homodimer. Requires Mg(2+) as cofactor.

It catalyses the reaction an NDP-alpha-D-glucose + D-glucose = alpha,alpha-trehalose + a ribonucleoside 5'-diphosphate + H(+). In terms of biological role, synthesizes trehalose from ADP-, UDP- or GDP-glucose and glucose. This Pyrococcus horikoshii (strain ATCC 700860 / DSM 12428 / JCM 9974 / NBRC 100139 / OT-3) protein is Trehalose synthase.